The chain runs to 265 residues: Undecaprenyl-diphosphatase (265 aa).

7 helical membrane passes run 38–58, 75–95, 108–128, 135–155, 181–201, 215–235, and 244–264; these read RSDF…CLAL, RDYV…GLIV, PVAW…HFAG, VVTW…GVFP, FVFM…LLEM, VAVA…WLLG, and VFAV…PAAA.

The protein belongs to the UppP family.

The protein resides in the cell inner membrane. It carries out the reaction di-trans,octa-cis-undecaprenyl diphosphate + H2O = di-trans,octa-cis-undecaprenyl phosphate + phosphate + H(+). Functionally, catalyzes the dephosphorylation of undecaprenyl diphosphate (UPP). Confers resistance to bacitracin. The sequence is that of Undecaprenyl-diphosphatase from Xanthomonas euvesicatoria pv. vesicatoria (strain 85-10) (Xanthomonas campestris pv. vesicatoria).